A 132-amino-acid polypeptide reads, in one-letter code: Small ribosomal subunit protein uS8 (132 aa).

Belongs to the universal ribosomal protein uS8 family. In terms of assembly, part of the 30S ribosomal subunit. Contacts proteins S5 and S12.

Functionally, one of the primary rRNA binding proteins, it binds directly to 16S rRNA central domain where it helps coordinate assembly of the platform of the 30S subunit. The protein is Small ribosomal subunit protein uS8 of Chelativorans sp. (strain BNC1).